The chain runs to 962 residues: Putative primase C962R (962 aa).

An SF3 helicase domain is found at 607–775 (ELDARLWIMF…PDPNNSYEKK (169 aa)). An ATP-binding site is contributed by 636–643 (GGGCNGKT).

It belongs to the asfivirus helicase C962R family.

This Ornithodoros (relapsing fever ticks) protein is Putative primase C962R.